Consider the following 303-residue polypeptide: Tyrosine recombinase XerC (303 aa).

Positions 6 to 92 (ASLAPQVEAF…ALRSFLNWLV (87 aa)) constitute a Core-binding (CB) domain. A Tyr recombinase domain is found at 113 to 292 (HLPKNIDVDE…DFQHLATVYD (180 aa)). Active-site residues include Arg-152, Lys-176, His-244, Arg-247, and His-270. Tyr-279 serves as the catalytic O-(3'-phospho-DNA)-tyrosine intermediate.

The protein belongs to the 'phage' integrase family. XerC subfamily. Forms a cyclic heterotetrameric complex composed of two molecules of XerC and two molecules of XerD, in which XerC interacts with XerD via its C-terminal region, XerD interacts with XerC via its C-terminal region and so on.

It localises to the cytoplasm. FtsK may regulate the catalytic switch between XerC and XerD in the heterotetrameric complex during the two steps of the recombination process. Its function is as follows. Site-specific tyrosine recombinase, which acts by catalyzing the cutting and rejoining of the recombining DNA molecules. Binds cooperatively to specific DNA consensus sequences that are separated from XerD binding sites by a short central region, forming the heterotetrameric XerC-XerD complex that recombines DNA substrates. The complex is essential to convert dimers of the bacterial chromosome into monomers to permit their segregation at cell division. It also contributes to the segregational stability of plasmids. In the complex XerC specifically exchanges the top DNA strands. This Yersinia pestis protein is Tyrosine recombinase XerC.